A 131-amino-acid chain; its full sequence is Hydrogenase maturation factor HypA (131 aa).

H2 serves as a coordination point for Ni(2+). Zn(2+) contacts are provided by C74, C77, C91, and C94.

It belongs to the HypA/HybF family.

Functionally, involved in the maturation of [NiFe] hydrogenases. Required for nickel insertion into the metal center of the hydrogenase. This Streptomyces avermitilis (strain ATCC 31267 / DSM 46492 / JCM 5070 / NBRC 14893 / NCIMB 12804 / NRRL 8165 / MA-4680) protein is Hydrogenase maturation factor HypA.